Here is a 204-residue protein sequence, read N- to C-terminus: Large ribosomal subunit protein bL25 (204 aa).

This sequence belongs to the bacterial ribosomal protein bL25 family. CTC subfamily. Part of the 50S ribosomal subunit; part of the 5S rRNA/L5/L18/L25 subcomplex. Contacts the 5S rRNA. Binds to the 5S rRNA independently of L5 and L18.

Its function is as follows. This is one of the proteins that binds to the 5S RNA in the ribosome where it forms part of the central protuberance. The polypeptide is Large ribosomal subunit protein bL25 (Burkholderia mallei (strain NCTC 10247)).